A 172-amino-acid chain; its full sequence is Protein sym-1 (172 aa).

5 helical membrane-spanning segments follow: residues 13–33 (PLLT…VAAQ), 52–72 (MVLY…RFLQ), 94–114 (GLFA…LEGT), 128–148 (LSTN…VVPL), and 152–172 (VLFV…LNGQ).

The protein belongs to the peroxisomal membrane protein PXMP2/4 family.

It localises to the mitochondrion inner membrane. Its function is as follows. May be involved in cellular response to stress. Required to maintain mitochondrial DNA (mtDNA) integrity and stability. This chain is Protein sym-1 (sym-1), found in Neurospora crassa (strain ATCC 24698 / 74-OR23-1A / CBS 708.71 / DSM 1257 / FGSC 987).